The sequence spans 311 residues: Olfactory receptor 1N1 (311 aa).

The Extracellular segment spans residues 1-23 (MENQSSISEFFLRGISAPPEQQQ). N-linked (GlcNAc...) asparagine glycosylation is present at Asn3. Residues 24–47 (SLFGIFLCMYLVTLTGNLLIILAI) traverse the membrane as a helical segment. Residues 48–55 (GSDLHLHT) are Cytoplasmic-facing. A helical transmembrane segment spans residues 56–77 (PMYFFLANLSFVDMGLTSSTVT). The Extracellular segment spans residues 78–98 (KMLVNIQTRHHTISYTGCLTQ). A disulfide bridge connects residues Cys95 and Cys187. Residues 99 to 118 (MYFFLMFGDLDSFFLAAMAY) traverse the membrane as a helical segment. Over 119 to 137 (DRYVAICHPLCYSTVMRPQ) the chain is Cytoplasmic. Residues 138-156 (VCALMLALCWVLTNIVALT) traverse the membrane as a helical segment. The Extracellular portion of the chain corresponds to 157-194 (HTFLMARLSFCVTGEIAHFFCDITPVLKLSCSDTHINE). The helical transmembrane segment at 195–217 (MMVFVLGGTVLIVPFLCIVTSYI) threads the bilayer. At 218 to 234 (HIVPAILRVRTRGGVGK) the chain is on the cytoplasmic side. The chain crosses the membrane as a helical span at residues 235–257 (AFSTCSSHLCVVCVFYGTLFSAY). Residues 258-270 (LCPPSIASEEKDI) are Extracellular-facing. Residues 271–290 (AAAAMYTIVTPMLNPFIYSL) form a helical membrane-spanning segment. Residues 291-311 (RNKDMKGALKRLFSHRSIVSS) lie on the Cytoplasmic side of the membrane.

It belongs to the G-protein coupled receptor 1 family.

It localises to the cell membrane. In terms of biological role, odorant receptor. The chain is Olfactory receptor 1N1 (OR1N1) from Homo sapiens (Human).